The sequence spans 375 residues: Trichodiene synthase (375 aa).

This sequence belongs to the trichodiene synthase family.

It catalyses the reaction (2E,6E)-farnesyl diphosphate = trichodiene + diphosphate. It participates in sesquiterpene biosynthesis; trichothecene biosynthesis. Its function is as follows. TS is a member of the terpene cyclase group of enzymes. It catalyzes the isomerization and cyclization of farnesyl pyro-phosphate to form trichodiene, the first cyclic intermediate in the biosynthetic pathway for trichothecenes. It serves to branch trichothecene biosynthesis from the isoprenoid pathway. This chain is Trichodiene synthase (TRI5), found in Fusarium boothii.